Consider the following 609-residue polypeptide: Phosphoenolpyruvate carboxykinase [GTP] (609 aa).

Residues Arg81 and 220–222 (YGG) contribute to the substrate site. Residues Lys229 and His249 each contribute to the Mn(2+) site. A substrate-binding site is contributed by Ser271. GTP is bound at residue 272–277 (ACGKTN). Cys273 is a catalytic residue. Asp296 contributes to the Mn(2+) binding site. 387–389 (NSR) contacts substrate. GTP is bound by residues Arg389, Arg420, and 515-518 (FGEN).

This sequence belongs to the phosphoenolpyruvate carboxykinase [GTP] family. In terms of assembly, monomer. The cofactor is Mn(2+).

The protein resides in the cytoplasm. The catalysed reaction is oxaloacetate + GTP = phosphoenolpyruvate + GDP + CO2. It participates in carbohydrate biosynthesis; gluconeogenesis. Catalyzes the conversion of oxaloacetate (OAA) to phosphoenolpyruvate (PEP), the rate-limiting step in the metabolic pathway that produces glucose from lactate and other precursors derived from the citric acid cycle. The polypeptide is Phosphoenolpyruvate carboxykinase [GTP] (Mycobacterium leprae (strain Br4923)).